The sequence spans 251 residues: L-xylulose reductase (251 aa).

NADP(+) is bound at residue 13–42; it reads LVTGASQGIGKEICLSLAKAGAQVIAFARN. Serine 143 provides a ligand contact to substrate. Tyrosine 156 serves as the catalytic Proton acceptor. Lysine 160 provides a ligand contact to NADP(+).

Belongs to the short-chain dehydrogenases/reductases (SDR) family. As to quaternary structure, homotetramer. As to expression, expressed in intestine, gonad and spermatids (at protein level). Expressed in intestine, uterine seam, gonadal sheath cells, spermathecal-uterus valve and spermatids.

The protein localises to the cell membrane. The catalysed reaction is xylitol + NADP(+) = L-xylulose + NADPH + H(+). With respect to regulation, strongly inhibited by 10% dimethyl sulfoxide. Catalyzes the NADPH-dependent reduction of L-xylulose, D-xylulose, L-(+) erythrulose, D-erythrose, D-threose, L-ribulose, 1,4-dibromo-2,3-butanedione and 2,3-heptanedione. Also active against isatin, 9,10-phenanthrenequinone, menadione, 2,3-hexaenadione and 3,4-hexahenadione. No activity observed when tested using NADH rather than NADPH. The polypeptide is L-xylulose reductase (Caenorhabditis elegans).